An 81-amino-acid chain; its full sequence is Small ribosomal subunit protein bS16 (81 aa).

It belongs to the bacterial ribosomal protein bS16 family.

This is Small ribosomal subunit protein bS16 from Clostridium beijerinckii (strain ATCC 51743 / NCIMB 8052) (Clostridium acetobutylicum).